Consider the following 64-residue polypeptide: Alpha-mammal toxin Lqq5 (64 aa).

Positions Lys-2–Asn-64 constitute an LCN-type CS-alpha/beta domain. Disulfide bonds link Cys-12-Cys-63, Cys-16-Cys-36, Cys-22-Cys-46, and Cys-26-Cys-48. Asn-64 carries the asparagine amide modification.

It belongs to the long (4 C-C) scorpion toxin superfamily. Sodium channel inhibitor family. Alpha subfamily. As to expression, expressed by the venom gland.

The protein resides in the secreted. Alpha toxins bind voltage-independently at site-3 of sodium channels (Nav) and inhibit the inactivation of the activated channels, thereby blocking neuronal transmission. Is active on mammals and bind with high affinity to rat brain synaptosome. Does not display phospholipid-binding activity. The chain is Alpha-mammal toxin Lqq5 from Leiurus quinquestriatus quinquestriatus (Egyptian scorpion).